We begin with the raw amino-acid sequence, 532 residues long: tRNA-2-methylthio-N(6)-dimethylallyladenosine synthase 2 (532 aa).

Residues 1 to 21 are disordered; the sequence is MTSTVAHGAGSAGPADDAEPM. In terms of domain architecture, MTTase N-terminal spans 24-140; it reads RTYQVRTYGC…LPALLDRARH (117 aa). [4Fe-4S] cluster is bound by residues Cys-33, Cys-69, Cys-103, Cys-177, Cys-181, and Cys-184. The Radical SAM core domain occupies 163–399; it reads RESAYAAWVS…VELQEQISLE (237 aa). Residues 402–470 enclose the TRAM domain; the sequence is RAIVGQRVEL…PHHLIADGGI (69 aa). The segment at 510–532 is disordered; the sequence is TSCGSAGGCGSADGAGSSAGDPQ. The span at 523-532 shows a compositional bias: low complexity; that stretch reads GAGSSAGDPQ.

This sequence belongs to the methylthiotransferase family. MiaB subfamily. As to quaternary structure, monomer. It depends on [4Fe-4S] cluster as a cofactor.

The protein resides in the cytoplasm. It carries out the reaction N(6)-dimethylallyladenosine(37) in tRNA + (sulfur carrier)-SH + AH2 + 2 S-adenosyl-L-methionine = 2-methylsulfanyl-N(6)-dimethylallyladenosine(37) in tRNA + (sulfur carrier)-H + 5'-deoxyadenosine + L-methionine + A + S-adenosyl-L-homocysteine + 2 H(+). Catalyzes the methylthiolation of N6-(dimethylallyl)adenosine (i(6)A), leading to the formation of 2-methylthio-N6-(dimethylallyl)adenosine (ms(2)i(6)A) at position 37 in tRNAs that read codons beginning with uridine. In Mycobacterium marinum (strain ATCC BAA-535 / M), this protein is tRNA-2-methylthio-N(6)-dimethylallyladenosine synthase 2.